A 137-amino-acid polypeptide reads, in one-letter code: Ribosome-binding factor A (137 aa).

This sequence belongs to the RbfA family. Monomer. Binds 30S ribosomal subunits, but not 50S ribosomal subunits or 70S ribosomes.

The protein localises to the cytoplasm. Its function is as follows. One of several proteins that assist in the late maturation steps of the functional core of the 30S ribosomal subunit. Associates with free 30S ribosomal subunits (but not with 30S subunits that are part of 70S ribosomes or polysomes). Required for efficient processing of 16S rRNA. May interact with the 5'-terminal helix region of 16S rRNA. The protein is Ribosome-binding factor A of Allorhizobium ampelinum (strain ATCC BAA-846 / DSM 112012 / S4) (Agrobacterium vitis (strain S4)).